A 288-amino-acid polypeptide reads, in one-letter code: Cell division protein DivIB (288 aa).

The Cytoplasmic portion of the chain corresponds to 1–25 (MEKVIDITERVPAMKKRRRRRTNFK). The helical transmembrane segment at 26–46 (FLALVTIFLFIIIILLYFQLP) threads the bilayer. The Extracellular segment spans residues 47 to 288 (YSDIKKIDIK…LEEQNEEEPE (242 aa)). A POTRA domain is found at 48–116 (SDIKKIDIKG…NEVQITVEEW (69 aa)). The span at 253-263 (LIKENTEKTEE) shows a compositional bias: basic and acidic residues. Residues 253-288 (LIKENTEKTEEPAEETENADTEEGGQLEEQNEEEPE) form a disordered region. Residues 264-288 (PAEETENADTEEGGQLEEQNEEEPE) show a composition bias toward acidic residues.

The protein belongs to the FtsQ/DivIB family. DivIB subfamily.

The protein localises to the cell membrane. Its function is as follows. Cell division protein that may be involved in stabilizing or promoting the assembly of the division complex. This Solibacillus silvestris (strain StLB046) (Bacillus silvestris) protein is Cell division protein DivIB.